The chain runs to 511 residues: MQEKTLTESIDAALSSIGEASRTTQPEIELRENGVVTTVLNGIALIRGLPGVGYEELVEMSGGVYGIAFNVDPDEVGVVLLGEYAKLQAGGRARRTGRVMDVPVGDGLLGRVVNPLGRPLDAEGEPRFSGRLPIERPSPGIMDRNAVSTPLQTGLKVVDAIVPIGRGQRELILGDRQTGKTAIAVATILNQKGRNVICIYCAIGQRASAVAKVLAQLREHGAMAHTVAVVTEGNDPSGLQYIAPYAATSIGEYFMEQGRDVLIVYDDLTNHARAYRELSLLLKRPPGREAFPGDIFYVHSRLLERSTHLRKELGGGSLTALPIIETEAQNISAYIPTNLISITDGQIYLSPTLFELGNLPAVDIGKSVSRVGGKAQLAAYRSVTGRLKLAYAQFEELENFARFGTRLDEASRKAITHGERIRECLKQDELDVLGVEEQILILLSLSEGQFDPLELSEVSGAMKRLSAAARELPRDLLERLHSDRPLSDEDRRRLLQTAEAALQKKRTAGRL.

174–181 (GDRQTGKT) provides a ligand contact to ATP.

The protein belongs to the ATPase alpha/beta chains family. F-type ATPases have 2 components, CF(1) - the catalytic core - and CF(0) - the membrane proton channel. CF(1) has five subunits: alpha(3), beta(3), gamma(1), delta(1), epsilon(1). CF(0) has four main subunits: a(1), b(1), b'(1) and c(9-12).

It is found in the cell inner membrane. It carries out the reaction ATP + H2O + 4 H(+)(in) = ADP + phosphate + 5 H(+)(out). Its function is as follows. Produces ATP from ADP in the presence of a proton gradient across the membrane. The alpha chain is a regulatory subunit. The protein is ATP synthase subunit alpha 1 of Chlorobium luteolum (strain DSM 273 / BCRC 81028 / 2530) (Pelodictyon luteolum).